A 400-amino-acid chain; its full sequence is MTIRQSSVQYVPYFNNRIKYARIPYIIKEFLENIICGIDIEKNVENINYLLDINMYVQNPEFYNNGYDDLNTFLEISENTYFGQSFIEDMELSTKIDELYKKNNTNHIVNKIMGLPLETNIIEKIIKKYYDTYQHKFSIDNNHGLTNLYNINPFREITTNNDLLNIIDIVKTTDKKYQTPIREYTGGKHIWINCYCQLINLGLEEHNESTQFIKNPDNIVEIAKNMNHVFNELYFNYQYINIIDNIFKNEFEVISSQTFLYYCDPTGQTNIVDNLNIGIGSVIFIPNHLSTSYGSFKTFKEFISPTKVIYKIKITNYPNKGKNWIFIDTYSRVQEEKEILIRANSYYVIEDIDYVLIEFNHDDFDNVSEPYVVKVIVMRLFDDVTSAVIYSTKLNTVVND.

Positions 161-380 constitute a TR mART core domain; sequence NDLLNIIDIV…YVVKVIVMRL (220 aa).

This is an uncharacterized protein from Acanthamoeba polyphaga (Amoeba).